The chain runs to 190 residues: Putative hydrolase YdeN (190 aa).

Residues S71, D137, and H164 each act as charge relay system in the active site.

This sequence belongs to the RBBP9 family.

This Bacillus subtilis (strain 168) protein is Putative hydrolase YdeN (ydeN).